A 46-amino-acid polypeptide reads, in one-letter code: DNA-directed RNA polymerases I, II, and III subunit rpabc4 (46 aa).

4 residues coordinate Zn(2+): C7, C10, C24, and C27. The segment at C7–C27 adopts a C4-type zinc-finger fold.

This sequence belongs to the archaeal Rpo12/eukaryotic RPC10 RNA polymerase subunit family. In terms of assembly, component of the RNA polymerase I (Pol I), RNA polymerase II (Pol II) and RNA polymerase III (Pol III) complexes consisting of at least 13, 12 and 17 subunits, respectively.

Its subcellular location is the nucleus. Functionally, DNA-dependent RNA polymerase catalyzes the transcription of DNA into RNA using the four ribonucleoside triphosphates as substrates. Common component of RNA polymerases I, II and III which synthesize ribosomal RNA precursors, mRNA precursors and many functional non-coding RNAs, and a small RNAs, such as 5S rRNA and tRNAs, respectively. In Dictyostelium discoideum (Social amoeba), this protein is DNA-directed RNA polymerases I, II, and III subunit rpabc4 (polr2k).